The following is a 221-amino-acid chain: Epididymal secretory glutathione peroxidase (221 aa).

An N-terminal signal peptide occupies residues 1–21; the sequence is MAIQLRVFYLVPLLLASYVQT. C73 is a catalytic residue.

It belongs to the glutathione peroxidase family. In terms of tissue distribution, epididymis.

The protein resides in the secreted. The enzyme catalyses 2 glutathione + H2O2 = glutathione disulfide + 2 H2O. Protects cells and enzymes from oxidative damage, by catalyzing the reduction of hydrogen peroxide, lipid peroxides and organic hydroperoxide, by glutathione. May constitute a glutathione peroxidase-like protective system against peroxide damage in sperm membrane lipids. The polypeptide is Epididymal secretory glutathione peroxidase (Gpx5) (Rattus norvegicus (Rat)).